The sequence spans 293 residues: Ankyrin repeat and SOCS box protein 11 (293 aa).

7 ANK repeats span residues 36-65 (DDRT…NVGM), 69-98 (DGIT…DANA), 102-131 (DGAT…AHHP), 134-163 (LLCS…NVDM), 167-196 (SVGT…DVQC), 199-228 (GLDT…DRTS), and 232-259 (EGKT…SLSQ). In terms of domain architecture, SOCS box spans 244–293 (SIKHLLQTAGTCSLSQLCRWCIRRSLGQKGLNKTKTLCLPHMLHNYLLYH).

Belongs to the ankyrin SOCS box (ASB) family. In terms of assembly, substrate-recognition component of the ECS(ASB11) complex, composed of asb11, cul5, elob, eloc and rnf7/rbx2. Expressed in the developing nervous system: localizes to neural plate margins and is abutting the proneuronal zone.

The protein resides in the endoplasmic reticulum. Its pathway is protein modification; protein ubiquitination. In terms of biological role, substrate-recognition component of a cullin-5-RING E3 ubiquitin-protein ligase complex (ECS complex, also named CRL5 complex), which mediates the ubiquitination and subsequent proteasomal degradation of target proteins. Acts as a regulator of the neuronal progenitor compartment size by maintaining the neural precursors in the proliferating undifferentiated state. The ECS(ASB11) complex acts as a positive regulator of Notch signaling pathway by mediating ubiquitination and degradation of DeltaA (dla). Also acts as a regulator of regenerative myogenesis. This Danio rerio (Zebrafish) protein is Ankyrin repeat and SOCS box protein 11.